The primary structure comprises 227 residues: Cytidylate kinase (227 aa).

12-20 contacts ATP; it reads GPSGAGKGT.

It belongs to the cytidylate kinase family. Type 1 subfamily.

It localises to the cytoplasm. The catalysed reaction is CMP + ATP = CDP + ADP. The enzyme catalyses dCMP + ATP = dCDP + ADP. The chain is Cytidylate kinase from Erwinia tasmaniensis (strain DSM 17950 / CFBP 7177 / CIP 109463 / NCPPB 4357 / Et1/99).